The following is a 340-amino-acid chain: Glycerol-3-phosphate dehydrogenase [NAD(P)+] (340 aa).

Residues Ser-11, Trp-12, Arg-33, and Lys-106 each coordinate NADPH. The sn-glycerol 3-phosphate site is built by Lys-106, Gly-137, and Ser-139. An NADPH-binding site is contributed by Ala-141. Residues Lys-192, Asp-245, Ser-255, Arg-256, and Asn-257 each coordinate sn-glycerol 3-phosphate. Catalysis depends on Lys-192, which acts as the Proton acceptor. Arg-256 provides a ligand contact to NADPH. NADPH-binding residues include Val-280 and Glu-282.

Belongs to the NAD-dependent glycerol-3-phosphate dehydrogenase family.

Its subcellular location is the cytoplasm. The catalysed reaction is sn-glycerol 3-phosphate + NAD(+) = dihydroxyacetone phosphate + NADH + H(+). The enzyme catalyses sn-glycerol 3-phosphate + NADP(+) = dihydroxyacetone phosphate + NADPH + H(+). It participates in membrane lipid metabolism; glycerophospholipid metabolism. Functionally, catalyzes the reduction of the glycolytic intermediate dihydroxyacetone phosphate (DHAP) to sn-glycerol 3-phosphate (G3P), the key precursor for phospholipid synthesis. This is Glycerol-3-phosphate dehydrogenase [NAD(P)+] from Bacillus anthracis (strain A0248).